The chain runs to 537 residues: Cytochrome P450 4F6 (537 aa).

Cysteine 468 lines the heme pocket.

It belongs to the cytochrome P450 family. It depends on heme as a cofactor. In terms of tissue distribution, high expression in liver and kidney. Lower expression in brain.

Its subcellular location is the endoplasmic reticulum membrane. It is found in the microsome membrane. It carries out the reaction an organic molecule + reduced [NADPH--hemoprotein reductase] + O2 = an alcohol + oxidized [NADPH--hemoprotein reductase] + H2O + H(+). The polypeptide is Cytochrome P450 4F6 (Cyp4f6) (Rattus norvegicus (Rat)).